A 71-amino-acid chain; its full sequence is Serine palmitoyltransferase small subunit A (71 aa).

Over 1–12 (MAGMALARAWKQ) the chain is Cytoplasmic. A helical transmembrane segment spans residues 13–29 (MSWFYYQYLLVTALYML). The Lumenal portion of the chain corresponds to 30–34 (EPWER). A helical membrane pass occupies residues 35–57 (TVFNSMLVSVVGMALYTGYVFMP). Over 58-71 (QHIMAILHYFEIVQ) the chain is Cytoplasmic.

This sequence belongs to the SPTSS family. SPTSSA subfamily. In terms of assembly, component of the serine palmitoyltransferase (SPT) complex, which is composed of SPTLC1, SPTLC2 or SPTLC3 and SPTSSA or SPTSSB. The heterodimer consisting of SPTLC1 and SPTLC2/SPTLC3 forms the catalytic core of the enzyme, while SPTSSA or SPTSSB subunits determine substrate specificity. SPT also interacts with ORMDL proteins, especially ORMDL3, which negatively regulate SPT activity in the presence of ceramides. Interacts with MBOAT7; the interaction plays a role in MBOAT7 localization to mitochondria-associated membranes.

The protein localises to the endoplasmic reticulum membrane. It functions in the pathway lipid metabolism; sphingolipid metabolism. In terms of biological role, component of the serine palmitoyltransferase multisubunit enzyme (SPT) that catalyzes the initial and rate-limiting step in sphingolipid biosynthesis by condensing L-serine and activated acyl-CoA (most commonly palmitoyl-CoA) to form long-chain bases. The SPT complex is composed of SPTLC1, SPTLC2 or SPTLC3 and SPTSSA or SPTSSB. Within this complex, the heterodimer consisting of SPTLC1 and SPTLC2/SPTLC3 forms the catalytic core. Within the SPT complex, SPTSSA stimulates the catalytic activity and plays a role in substrate specificity, which depends upon the overall complex composition. The SPTLC1-SPTLC2-SPTSSA complex shows a strong preference for C16-CoA substrate, while the SPTLC1-SPTLC3-SPTSSA isozyme uses both C14-CoA and C16-CoA as substrates, with a slight preference for C14-CoA. Independently of its action as a SPT component, may be involved in MBOAT7 localization to mitochondria-associated membranes, a membrane bridge between the endoplasmic reticulum and mitochondria, may hence affect MBOAT7-catalyzed incorporation of arachidonic acid into phosphatidylinositol. This Mus musculus (Mouse) protein is Serine palmitoyltransferase small subunit A.